A 680-amino-acid polypeptide reads, in one-letter code: Extracellular matrix protein 2 (680 aa).

An N-terminal signal peptide occupies residues 1-20 (MKFSSLYCFLLLLIFQTDFG). A VWFC domain is found at 100 to 157 (GHCLANGMIMYNKAVWSPEPCTTCLCLNGKVLCDETKCHPQMCPQTIIPEGECCPVCS). Positions 189–198 (QLEEDEEEVK) are enriched in acidic residues. Residues 189-293 (QLEEDEEEVK…RLPIPATPRG (105 aa)) form a disordered region. Positions 223-238 (QSREGKAQRPEEEGRQ) are enriched in basic and acidic residues. Over residues 249-272 (NEEDDDEEEEDDDDEEEDDDDEDE) the composition is skewed to acidic residues. The short motif at 275–277 (RGD) is the Cell attachment site element. The 38-residue stretch at 288 to 325 (PATPRGIPSLPSMCSLSYKTISCISADLTQIPPLTAPE) folds into the LRRNT domain. LRR repeat units lie at residues 349-369 (NLER…GPKA), 375-396 (NLMR…LPST), 397-417 (LEEL…SLSD), 420-440 (QLVT…NSLA), 446-466 (SLSY…GLPA), 467-488 (SIEE…SFNH), 491-511 (KINV…APLA), 517-538 (NLES…LPKS), 539-559 (LVHL…VFGH), 563-583 (GLEY…DRVS), 590-611 (SLRE…VQEM), 613-634 (ALHF…QICN), and 642-665 (NLQH…AFSC). Asn359 is a glycosylation site (N-linked (GlcNAc...) asparagine). An N-linked (GlcNAc...) asparagine glycan is attached at Asn430. N-linked (GlcNAc...) asparagine glycosylation is present at Asn487.

Belongs to the small leucine-rich proteoglycan (SLRP) family. SLRP class I subfamily. In terms of assembly, interacts with numerous extracellular matrix proteins. Interacts with MSL1 and RASSF1.

Its subcellular location is the secreted. The protein localises to the extracellular space. It localises to the extracellular matrix. In terms of biological role, promotes matrix assembly and cell adhesiveness. The protein is Extracellular matrix protein 2 (ECM2) of Bos taurus (Bovine).